We begin with the raw amino-acid sequence, 125 residues long: Fumarate reductase subunit D (125 aa).

A run of 3 helical transmembrane segments spans residues 30 to 50 (FAMI…MGVI), 60 to 80 (VVSF…LALP), and 105 to 125 (IACY…IFML).

The protein belongs to the FrdD family. In terms of assembly, part of an enzyme complex containing four subunits: a flavoprotein (FrdA), an iron-sulfur protein (FrdB), and two hydrophobic anchor proteins (FrdC and FrdD).

Its subcellular location is the cell inner membrane. Functionally, anchors the catalytic components of the fumarate reductase complex to the cell membrane, binds quinones. This is Fumarate reductase subunit D from Vibrio vulnificus (strain YJ016).